The chain runs to 399 residues: Exodeoxyribonuclease 7 large subunit (399 aa).

Belongs to the XseA family. As to quaternary structure, heterooligomer composed of large and small subunits.

The protein resides in the cytoplasm. It carries out the reaction Exonucleolytic cleavage in either 5'- to 3'- or 3'- to 5'-direction to yield nucleoside 5'-phosphates.. Its function is as follows. Bidirectionally degrades single-stranded DNA into large acid-insoluble oligonucleotides, which are then degraded further into small acid-soluble oligonucleotides. This chain is Exodeoxyribonuclease 7 large subunit, found in Clostridium botulinum (strain Eklund 17B / Type B).